Here is a 273-residue protein sequence, read N- to C-terminus: Large ribosomal subunit protein uL2 (273 aa).

A disordered region spans residues Val228–Lys273. The segment covering Lys254 to Lys273 has biased composition (basic residues).

This sequence belongs to the universal ribosomal protein uL2 family. As to quaternary structure, part of the 50S ribosomal subunit. Forms a bridge to the 30S subunit in the 70S ribosome.

Functionally, one of the primary rRNA binding proteins. Required for association of the 30S and 50S subunits to form the 70S ribosome, for tRNA binding and peptide bond formation. It has been suggested to have peptidyltransferase activity; this is somewhat controversial. Makes several contacts with the 16S rRNA in the 70S ribosome. This Rickettsia canadensis (strain McKiel) protein is Large ribosomal subunit protein uL2.